An 89-amino-acid chain; its full sequence is Small ribosomal subunit protein uS14 (89 aa).

It belongs to the universal ribosomal protein uS14 family. Part of the 30S ribosomal subunit. Contacts proteins S3 and S10.

Binds 16S rRNA, required for the assembly of 30S particles and may also be responsible for determining the conformation of the 16S rRNA at the A site. The protein is Small ribosomal subunit protein uS14 of Leuconostoc mesenteroides subsp. mesenteroides (strain ATCC 8293 / DSM 20343 / BCRC 11652 / CCM 1803 / JCM 6124 / NCDO 523 / NBRC 100496 / NCIMB 8023 / NCTC 12954 / NRRL B-1118 / 37Y).